The sequence spans 508 residues: DNA-directed RNA polymerase subunit Rpo1C (508 aa).

The tract at residues 1 to 123 (MIIWKDTAKN…REKYEYEKKV (123 aa)) is unknown. Positions 124–508 (SSQVLDVIAE…IYKGYPKTKK (385 aa)) are DNA-directed RNA polymerase subunit Rpo1C.

This sequence belongs to the RNA polymerase beta' chain family. Part of the RNA polymerase complex.

It localises to the cytoplasm. It catalyses the reaction RNA(n) + a ribonucleoside 5'-triphosphate = RNA(n+1) + diphosphate. Its function is as follows. DNA-dependent RNA polymerase (RNAP) catalyzes the transcription of DNA into RNA using the four ribonucleoside triphosphates as substrates. Forms part of the jaw domain. This is DNA-directed RNA polymerase subunit Rpo1C from Thermoplasma volcanium (strain ATCC 51530 / DSM 4299 / JCM 9571 / NBRC 15438 / GSS1).